The chain runs to 415 residues: MDPDTEQMRVEKPNHEQPKPNTEFPDGGFKAWSVVVGAFCGLFVGVFQAYYEANQLQDLSPSTVSWIPAISMFIMFITGPFVGRAFDNYGPRYLLLAGTLLHVFGLMMASISSQYYQYILSQAICSPLGAAMVLYPSFSCVTTWFRQKRALALGITASGSSLGGTILPIVVNRLIPRIGFGWTMRACAFLLLGLLLVTNLTVRSRVAPQPKEAGIIAYLRPFTSLSFILTSLAGFFYSMGMFIPITFMVTYGEHVGLSNSMAGYLVSIFNASSGIGRILPGYIADKVGSFNVSIAAATLSTIFMLGLWLPGHSRESAIAFAALFGFSSGTYTAISPALIAHISDLEEIGTRSGTMYAFMSVAALTGSPIGGALISSAGGSYWKLQVFAGCMLGAGTVFYVLARLYITKGRLWEKV.

A compositionally biased stretch (basic and acidic residues) spans 1–18 (MDPDTEQMRVEKPNHEQP). A disordered region spans residues 1 to 22 (MDPDTEQMRVEKPNHEQPKPNT). Transmembrane regions (helical) follow at residues 27 to 47 (GGFK…VGVF), 63 to 83 (TVSW…PFVG), 93 to 113 (YLLL…SISS), 118 to 138 (YILS…YPSF), 151 to 171 (LALG…PIVV), and 178 to 198 (IGFG…LLVT). N-linked (GlcNAc...) asparagine glycosylation occurs at Asn199. 6 consecutive transmembrane segments (helical) span residues 227–247 (FILT…PITF), 264–284 (YLVS…GYIA), 290–310 (FNVS…LWLP), 318–338 (IAFA…SPAL), 354–374 (TMYA…GALI), and 386–406 (VFAG…RLYI).

This sequence belongs to the major facilitator superfamily. Monocarboxylate porter (TC 2.A.1.13) family.

It localises to the membrane. Functionally, MFS-type transporter; part of the Fusarium detoxification of benzoxazolinone cluster 2 (FDB2) involved in the degradation of benzoxazolinones produced by the host plant. Maize, wheat, and rye produce the 2 benzoxazinone phytoanticipins 2,4-dihy-droxy-7-methoxy-1,4-benzoxazin-3-one (DIMBOA) and 2,4-dihydroxy-1,4-benzoxazin-3-one (DIBOA) that, due to their inherent instability once released, spontaneously degrade to the more stable corresponding benzoxazolinones, 6-methoxy-2-benzoxazolinone (MBOA) and 2-benzoxazolinone (BOA), respectively. The polypeptide is MFS-type transporter FVEG_12626 (Gibberella moniliformis (strain M3125 / FGSC 7600) (Maize ear and stalk rot fungus)).